An 84-amino-acid polypeptide reads, in one-letter code: Acyl carrier protein homolog (84 aa).

The Carrier domain maps to 4–79 (HEILLKIKEI…DLVLEVKNLL (76 aa)). At Ser39 the chain carries O-(pantetheine 4'-phosphoryl)serine.

In terms of processing, 4'-phosphopantetheine is transferred from CoA to a specific serine of the apo-ACP-like protein.

The protein operates within lipid metabolism; fatty acid biosynthesis. Carrier of the growing fatty acid chain in fatty acid biosynthesis. The polypeptide is Acyl carrier protein homolog (Mycoplasma genitalium (strain ATCC 33530 / DSM 19775 / NCTC 10195 / G37) (Mycoplasmoides genitalium)).